A 544-amino-acid chain; its full sequence is Probable protein kinase UbiB (544 aa).

The region spanning 123–500 (DFDEKALASA…RNKQRKSQYL (378 aa)) is the Protein kinase domain. ATP contacts are provided by residues 129 to 137 (LASASIAQV) and Lys-152. Asp-286 (proton acceptor) is an active-site residue. The next 2 helical transmembrane spans lie at 499-519 (YLLGIGATLILCGSLFFISAS) and 522-542 (MAIAFMSAGALSWIIGWYKSG).

This sequence belongs to the ABC1 family. UbiB subfamily.

The protein resides in the cell inner membrane. It participates in cofactor biosynthesis; ubiquinone biosynthesis [regulation]. Is probably a protein kinase regulator of UbiI activity which is involved in aerobic coenzyme Q (ubiquinone) biosynthesis. Required for the expression of 2'-N-acetyltransferase. The sequence is that of Probable protein kinase UbiB from Providencia stuartii.